Consider the following 309-residue polypeptide: NAD kinase (309 aa).

Aspartate 89 serves as the catalytic Proton acceptor. NAD(+) contacts are provided by residues aspartate 89–glycine 90, asparagine 163–glutamate 164, histidine 174, arginine 191, aspartate 193, and threonine 204–serine 209.

The protein belongs to the NAD kinase family. A divalent metal cation serves as cofactor.

The protein localises to the cytoplasm. The enzyme catalyses NAD(+) + ATP = ADP + NADP(+) + H(+). In terms of biological role, involved in the regulation of the intracellular balance of NAD and NADP, and is a key enzyme in the biosynthesis of NADP. Catalyzes specifically the phosphorylation on 2'-hydroxyl of the adenosine moiety of NAD to yield NADP. This is NAD kinase from Shewanella sp. (strain W3-18-1).